Here is a 1026-residue protein sequence, read N- to C-terminus: Lon protease homolog, mitochondrial (1026 aa).

A mitochondrion-targeting transit peptide spans 1-29 (MLGTRVTRAVYTRAPLKLQLRALGLHRRY). Disordered regions lie at residues 29–55 (YVHN…DKKL) and 185–206 (ASEE…DKVS). Residues 62–345 (MLALPISRRP…KSLLVLKKEL (284 aa)) enclose the Lon N-terminal domain. A compositionally biased stretch (acidic residues) spans 185 to 194 (ASEETKDEET). Residues 195-206 (VDKTESATDKVS) are compositionally biased toward basic and acidic residues. Position 497-504 (497-504 (GPPGVGKT)) interacts with ATP. The interval 711–785 (TEPLVSTSEE…EEEEDTSMIV (75 aa)) is disordered. Residues 714–737 (LVSTSEEPQLSQTNQNISSSSAED) are compositionally biased toward polar residues. In terms of domain architecture, Lon proteolytic spans 815-1001 (TTPPGVIMGL…DDIYKRLFSG (187 aa)). Residues serine 907 and lysine 950 contribute to the active site.

This sequence belongs to the peptidase S16 family. Homohexamer or homoheptamer. Organized in a ring with a central cavity.

Its subcellular location is the mitochondrion matrix. It catalyses the reaction Hydrolysis of proteins in presence of ATP.. Functionally, ATP-dependent serine protease that mediates the selective degradation of misfolded, unassembled or oxidatively damaged polypeptides as well as certain short-lived regulatory proteins in the mitochondrial matrix. May also have a chaperone function in the assembly of inner membrane protein complexes. Participates in the regulation of mitochondrial gene expression and in the maintenance of the integrity of the mitochondrial genome. Binds to mitochondrial DNA in a site-specific manner. The polypeptide is Lon protease homolog, mitochondrial (Candida glabrata (strain ATCC 2001 / BCRC 20586 / JCM 3761 / NBRC 0622 / NRRL Y-65 / CBS 138) (Yeast)).